The chain runs to 420 residues: MSDLHKAFAKSKLAKLPPEAPLLSESSSMNHPAESSHDEDSSSVSSTGTVIPSPSRQLFARASQGSSDSSSLSWSDFFAKELFLTRETDTLRIIHHVYLTPPTDSGPLFVMHHGAGSSGLSFATCAEEIRKILPKAGILSLDARDHGRTSVQRTDGGAAELDLSLETLNQDLVYVARKTQAEMGWEELPDLVLVGHSLGGAVITDVAKKGELGNKVLAYAVLDVVEGSAMDALQSMEKYLSTRPSRFPSLTSGVEWHTRSRTIRNRASARVSVPSLLYKEETPSDPAKPWVWRTNLSATKPFWEDWFIGLSRKFLEARGGKLLLLAGTDRLDKELMIGQMQGKYQLQVLPEAGHFIQEDMPAKTAQILVDFYKRNDRSALVLPPKVADMRASAAMQKGAGAGASFSALHGGSSAGHLHKP.

Composition is skewed to low complexity over residues 18-28 (PEAPLLSESSS) and 42-51 (SSVSSTGTVI). The interval 18 to 51 (PEAPLLSESSSMNHPAESSHDEDSSSVSSTGTVI) is disordered. Active-site residues include Ser197, Asp223, and His354.

The protein belongs to the AB hydrolase superfamily.

The enzyme catalyses [phosphatase 2A protein]-C-terminal L-leucine methyl ester + H2O = [phosphatase 2A protein]-C-terminal L-leucine + methanol + H(+). In terms of biological role, demethylates proteins that have been reversibly carboxymethylated. Demethylates the phosphatase PP2A catalytic subunit. The chain is Protein phosphatase methylesterase 1 (ppe1) from Aspergillus fumigatus (strain ATCC MYA-4609 / CBS 101355 / FGSC A1100 / Af293) (Neosartorya fumigata).